The chain runs to 247 residues: Granulin (247 aa).

This sequence belongs to the polyhedrin family.

Component of the virus occlusion bodies, which are large proteinaceous structures, that protect the virus from the outside environment for extended periods until they are ingested by insect larvae. The polypeptide is Granulin (Agrotis segetum granulosis virus (AsGV)).